We begin with the raw amino-acid sequence, 331 residues long: 3-dehydroquinate synthase homolog (331 aa).

The protein belongs to the archaeal-type DHQ synthase family.

This is 3-dehydroquinate synthase homolog from Persephonella marina (strain DSM 14350 / EX-H1).